A 496-amino-acid chain; its full sequence is Glutamyl-tRNA(Gln) amidotransferase subunit A (496 aa).

Catalysis depends on charge relay system residues K75 and S150. The active-site Acyl-ester intermediate is S174.

It belongs to the amidase family. GatA subfamily. In terms of assembly, heterotrimer of A, B and C subunits.

It carries out the reaction L-glutamyl-tRNA(Gln) + L-glutamine + ATP + H2O = L-glutaminyl-tRNA(Gln) + L-glutamate + ADP + phosphate + H(+). In terms of biological role, allows the formation of correctly charged Gln-tRNA(Gln) through the transamidation of misacylated Glu-tRNA(Gln) in organisms which lack glutaminyl-tRNA synthetase. The reaction takes place in the presence of glutamine and ATP through an activated gamma-phospho-Glu-tRNA(Gln). This Burkholderia vietnamiensis (strain G4 / LMG 22486) (Burkholderia cepacia (strain R1808)) protein is Glutamyl-tRNA(Gln) amidotransferase subunit A.